The sequence spans 43 residues: Metallothionein B (43 aa).

Residues 1 to 16 (SCAGSCKCKNCRCRSC) are beta. Residues C2, C6, C8, C11, C13, C16, C20, C21, C23, C24, C28, C31, C35, and C37 each contribute to the a divalent metal cation site. Positions 17-43 (RKSCCSCCPAGCNNCVKGCVCKEPASS) are alpha.

It belongs to the metallothionein superfamily. Type 1 family.

Functionally, metallothioneins have a high content of cysteine residues that bind various heavy metals. This is Metallothionein B from Colinus virginianus (Northern bobwhite).